Reading from the N-terminus, the 240-residue chain is U1 small nuclear ribonucleoprotein C (240 aa).

A Matrin-type zinc finger spans residues 4–36; the sequence is YYCEYCDIYLTHSSPVGRRQHIQGRKHISAKIE. 2 disordered regions span residues 86-122 and 175-240; these read GMKH…SKYH and IDSD…SVDA. 2 stretches are compositionally biased toward basic and acidic residues: residues 178–194 and 203–219; these read DPVK…DNAI and DQGD…HADH. A compositionally biased stretch (polar residues) spans 226–240; it reads TDGTANGNDQVSVDA.

The protein belongs to the U1 small nuclear ribonucleoprotein C family. As to quaternary structure, U1 snRNP is composed of the 7 core Sm proteins B/B', D1, D2, D3, E, F and G that assemble in a heptameric protein ring on the Sm site of the small nuclear RNA to form the core snRNP, and at least 3 U1 snRNP-specific proteins U1-70K, U1-A and U1-C. U1-C interacts with U1 snRNA and the 5' splice-site region of the pre-mRNA.

It localises to the nucleus. In terms of biological role, component of the spliceosomal U1 snRNP, which is essential for recognition of the pre-mRNA 5' splice-site and the subsequent assembly of the spliceosome. U1-C is directly involved in initial 5' splice-site recognition for both constitutive and regulated alternative splicing. The interaction with the 5' splice-site seems to precede base-pairing between the pre-mRNA and the U1 snRNA. Stimulates commitment or early (E) complex formation by stabilizing the base pairing of the 5' end of the U1 snRNA and the 5' splice-site region. The chain is U1 small nuclear ribonucleoprotein C from Plasmodium vivax (strain Salvador I).